Here is a 578-residue protein sequence, read N- to C-terminus: Oxygen sensor histidine kinase response regulator DevS/DosS (578 aa).

GAF domains are found at residues 63-200 and 231-369; these read DLEA…GIAV and EPAT…ALAW. Heme is bound at residue H149. One can recognise a Histidine kinase domain in the interval 383–578; the sequence is VLTDRDRIAR…VLRWSAPLSQ (196 aa). Phosphohistidine; by autocatalysis is present on H395.

Mg(2+) serves as cofactor. Requires heme as cofactor.

It is found in the cytoplasm. It catalyses the reaction ATP + protein L-histidine = ADP + protein N-phospho-L-histidine.. Member of the two-component regulatory system DevR/DevS (DosR/DosS) involved in onset of the dormancy response. Regulates an approximately 48-member regulon. Required for full induction of the DevR (DosR) regulon; acts later than DosT to positively regulate expression of the DevR regulon during adaptation to anaerobiosis. Characterized as an oxygen sensor; O(2) acts as a switch, with O(2)-bound Fe(2+) protein inactive in autophosphorylation. Has also been suggested to act as a redox sensor, or perhaps as a dual oxygen/redox sensor. Donates a phosphate group to transcriptional regulator DevR (DosR). This chain is Oxygen sensor histidine kinase response regulator DevS/DosS (devS), found in Mycobacterium tuberculosis (strain CDC 1551 / Oshkosh).